Here is a 126-residue protein sequence, read N- to C-terminus: Fluoride-specific ion channel FluC (126 aa).

The next 4 helical transmembrane spans lie at 4-24, 35-55, 67-87, and 100-120; these read YLYI…VSGV, IGTF…TGLF, LLIL…MFES, and ALNI…GLAL. Gly-75 and Thr-78 together coordinate Na(+).

Belongs to the fluoride channel Fluc/FEX (TC 1.A.43) family.

Its subcellular location is the cell inner membrane. It catalyses the reaction fluoride(in) = fluoride(out). Its activity is regulated as follows. Na(+) is not transported, but it plays an essential structural role and its presence is essential for fluoride channel function. In terms of biological role, fluoride-specific ion channel. Important for reducing fluoride concentration in the cell, thus reducing its toxicity. The sequence is that of Fluoride-specific ion channel FluC from Maridesulfovibrio salexigens (strain ATCC 14822 / DSM 2638 / NCIMB 8403 / VKM B-1763) (Desulfovibrio salexigens).